Reading from the N-terminus, the 512-residue chain is MAIQAAEISQILKDQIKSFGQDAQVAEVGRVLSVGDGIARVYGLDNVQAGEMVEFPGGIQGMALNLEADNVGVVIFGSDRDIKEGDTVKRTNSIVDVPAGNELLGRVVDGLGNPLDGKGPINASERRVADSKAPGIIPRKSVHEPMATGLKAIDAMIPVGRGQRELIIGDRQTGKTAVALDTILNQKSYNDAAGDDENKKLYCIYVAVGQKRSTVAQLVKKLEETGAIEYSIVVAATASDPAPMQFLAPYAATAMAEFFRDNGRHALIVYDDLSKQAVSYRQMSLLLRRPPGREAYPGDVFYLHSRLLERSSKLNEDNGGGSLTALPVIETQGGDVSAFIPTNVISITDGQIFLETELFFQGIRPAVNTGLSVSRVGSSAQTKAMSSVAGPVKLSLAQYREMAAFAQFGSDLDASTQRLLARGARLTELMKQPQYSPLTNAEIVTMIFAGTNGFLDEIKVSDVGRFEEGLLNHMRSNKKDVLDWITNEDPKIKGDAADKLKAAIEEFAADFA.

169 to 176 is an ATP binding site; the sequence is GDRQTGKT.

The protein belongs to the ATPase alpha/beta chains family. As to quaternary structure, F-type ATPases have 2 components, CF(1) - the catalytic core - and CF(0) - the membrane proton channel. CF(1) has five subunits: alpha(3), beta(3), gamma(1), delta(1), epsilon(1). CF(0) has four main subunits: a(1), b(1), b'(1) and c(9-12).

It is found in the cell inner membrane. The enzyme catalyses ATP + H2O + 4 H(+)(in) = ADP + phosphate + 5 H(+)(out). In terms of biological role, produces ATP from ADP in the presence of a proton gradient across the membrane. The alpha chain is a regulatory subunit. The polypeptide is ATP synthase subunit alpha (Jannaschia sp. (strain CCS1)).